The sequence spans 132 residues: Ribonuclease P protein component 2 (132 aa).

The protein belongs to the eukaryotic/archaeal RNase P protein component 2 family. As to quaternary structure, consists of a catalytic RNA component and at least 4-5 protein subunits.

The protein resides in the cytoplasm. It carries out the reaction Endonucleolytic cleavage of RNA, removing 5'-extranucleotides from tRNA precursor.. Part of ribonuclease P, a protein complex that generates mature tRNA molecules by cleaving their 5'-ends. The sequence is that of Ribonuclease P protein component 2 from Methanosarcina acetivorans (strain ATCC 35395 / DSM 2834 / JCM 12185 / C2A).